Consider the following 383-residue polypeptide: MIISSGNDYRAAAQRRLPPFLFHYIDGGAYAEYTLKRNVQDLSEIALRQRVLNDMSALSLETKLFNETLSMPVALAPVGLTGMYARRGEVQAAMAADKKGIPFTLSTVSVCPIEEVAPAINRPMWFQLYVLRDRGFMRNALERAKAAGCSTLVFTVDMPVPGARYRDAHSGMSGPNAAMRRYMQSVFHPHWSWNVGLMGRPHDLGNISKYLGKPTGLEDYIGWLGSNFDPSISWKDLEWIREFWDGPMVIKGILDPEDAKDAVRFGADGIVVSNHGGRQLDGVMSSARALPAIADAVKGDLAILADSGIRNGLDVVRMLALGADTVLLGRAFVYALAAAGGQGVSNLLDLIDKEMRVAMTLTGAKSISDINTDCLVQAIKQGL.

The FMN hydroxy acid dehydrogenase domain maps to 1–380; sequence MIISSGNDYR…NTDCLVQAIK (380 aa). Y24 serves as a coordination point for substrate. 2 residues coordinate FMN: S106 and Q127. Y129 serves as a coordination point for substrate. FMN is bound at residue T155. Residue R164 coordinates substrate. K251 contacts FMN. H275 serves as the catalytic Proton acceptor. R278 contributes to the substrate binding site. Residue 306–330 coordinates FMN; sequence DSGIRNGLDVVRMLALGADTVLLGR.

The protein belongs to the FMN-dependent alpha-hydroxy acid dehydrogenase family. Requires FMN as cofactor.

The protein localises to the cell inner membrane. The enzyme catalyses (S)-lactate + A = pyruvate + AH2. Functionally, catalyzes the conversion of L-lactate to pyruvate. Is coupled to the respiratory chain. This Acinetobacter baumannii (strain SDF) protein is L-lactate dehydrogenase.